Here is a 290-residue protein sequence, read N- to C-terminus: 4-hydroxybenzoate octaprenyltransferase (290 aa).

Transmembrane regions (helical) follow at residues 23–43 (IGTELVFWPTMWALWIASDGY), 46–66 (LKMFVVMTLGVLFMRAAGCAI), 96–116 (AIWVFLALVAASAALLLFLPI), 118–138 (TFYWSFGALFLAFIYPFMKRY), 141–161 (LPQVFLGAAFSWAIPMAYTAT), 169–189 (CWLLYFGNLAWTVAYDTQYAI), 212–232 (IPIISTLQLSSLLLIGMALYI), 235–255 (LLFPWGIIGLVVVAVDFIYQW), and 265–285 (LCFWAFRHNRWVGLIIFLAIL).

It belongs to the UbiA prenyltransferase family. Requires Mg(2+) as cofactor.

The protein resides in the cell inner membrane. It carries out the reaction all-trans-octaprenyl diphosphate + 4-hydroxybenzoate = 4-hydroxy-3-(all-trans-octaprenyl)benzoate + diphosphate. It participates in cofactor biosynthesis; ubiquinone biosynthesis. Catalyzes the prenylation of para-hydroxybenzoate (PHB) with an all-trans polyprenyl group. Mediates the second step in the final reaction sequence of ubiquinone-8 (UQ-8) biosynthesis, which is the condensation of the polyisoprenoid side chain with PHB, generating the first membrane-bound Q intermediate 3-octaprenyl-4-hydroxybenzoate. This chain is 4-hydroxybenzoate octaprenyltransferase, found in Acinetobacter baylyi (strain ATCC 33305 / BD413 / ADP1).